Here is a 324-residue protein sequence, read N- to C-terminus: Short-chain dehydrogenase/reductase iacJ (324 aa).

NADP(+)-binding residues include isoleucine 42, lysine 66, aspartate 93, asparagine 120, tyrosine 204, lysine 208, and threonine 239. The Proton donor role is filled by tyrosine 204. Lysine 208 serves as the catalytic Lowers pKa of active site Tyr.

This sequence belongs to the short-chain dehydrogenases/reductases (SDR) family.

It participates in secondary metabolite biosynthesis. Its function is as follows. Short-chain dehydrogenase/reductase; part of the gene cluster that mediates the biosynthesis of iso-A82775C, a enylepoxycyclohexane and biosynthetic precursor of the chloropestolide anticancer natural products. Within the cluster, the prenyltransferase iacE prenylates siccayne to generate pestalodiol E, using dimethylallyl diphosphate (DMAPP) as cosubstrate. The probable oxidoreductase iacF is then involved in the epoxidation of pestalodiol F to pestalodiol F, which is further converted to pestalofone A by the short-chain dehydrogenase/reductase iacG. Iso-A82775C is subsequently generated from pestalofone A by the short-chain dehydrogenase/reductase iacC. Iso-A82775C is further condensed with maldoxin via a Diels-Alder reaction to produce the anticancer natural products chloropestolides A to E. In Pestalotiopsis fici (strain W106-1 / CGMCC3.15140), this protein is Short-chain dehydrogenase/reductase iacJ.